A 1968-amino-acid chain; its full sequence is RNA replication polyprotein (1968 aa).

An Alphavirus-like MT domain is found at 63–254 (SPYSAVVHSH…YQQPLKGGYL (192 aa)). Positions 883-991 (YKRVSGPGDG…SEHYEPQVLR (109 aa)) constitute an OTU domain. The Peptidase C23 domain maps to 990–1080 (LRNGCVIESV…ISDEHMSFCG (91 aa)). Residues Cys994 and His1075 contribute to the active site. One can recognise a (+)RNA virus helicase ATP-binding domain in the interval 1134-1316 (ATGVLGSALF…KVRSHRFLNC (183 aa)). Residue 1166-1173 (GTFGSGKS) coordinates ATP. A (+)RNA virus helicase C-terminal domain is found at 1317–1454 (NFIGRLPCEI…CKTAIPDDLN (138 aa)). Residues 1749-1856 (RICTESDYEA…SRRLQPTKKF (108 aa)) enclose the RdRp catalytic domain.

It belongs to the potexviruses/carlaviruses RNA replication protein family. Post-translationally, specific enzymatic cleavages by the viral protease yield mature proteins.

It catalyses the reaction RNA(n) + a ribonucleoside 5'-triphosphate = RNA(n+1) + diphosphate. The enzyme catalyses ATP + H2O = ADP + phosphate + H(+). RNA-directed RNA polymerase involved in viral RNA replication. Functionally, protease: Thiol protease that cleaves the polyprotein. This Solanum tuberosum (Potato) protein is RNA replication polyprotein.